Consider the following 212-residue polypeptide: SOSS complex subunit B1 (212 aa).

The segment at residues 22–92 is a DNA-binding region (OB); it reads IVLETGRVTK…TLYTGRGGDL (71 aa). Residues 110–212 are disordered; that stretch reads EPNPEYNTQQ…GKETRRSSKR (103 aa). Over residues 114–130 the composition is skewed to polar residues; sequence EYNTQQAPNKSVQNNDN. Threonine 117 carries the phosphothreonine; by ATM modification. Over residues 131–148 the composition is skewed to low complexity; sequence SPTAPQATTGPPAASPAS. Polar residues predominate over residues 149–160; sequence ENQNGNGLSTQL. A compositionally biased stretch (low complexity) spans 166–178; that stretch reads PHPSHTPSHPPST.

It belongs to the SOSS-B family. SOSS-B1 subfamily. Component of the SOSS complex, composed of SOSS-B (SOSS-B1/NABP2 or SOSS-B2/NABP1), SOSS-A/INTS3 and SOSS-C/INIP. SOSS complexes containing SOSS-B1/NABP2 are more abundant than complexes containing SOSS-B2/NABP1. Directly interacts with ATM, SOSS-A/INTS3 and RAD51. Interacts with INTS7. In terms of processing, phosphorylated by ATM in response to DNA damage. Phosphorylation prevents degradation by the proteasome, hence stabilization of the protein and accumulation within cells. Ubiquitinated in a FBXL5-dependent manner, leading to proteasomal degradation.

The protein resides in the nucleus. In terms of biological role, component of the SOSS complex, a multiprotein complex that functions downstream of the MRN complex to promote DNA repair and G2/M checkpoint. In the SOSS complex, acts as a sensor of single-stranded DNA that binds to single-stranded DNA, in particular to polypyrimidines. The SOSS complex associates with DNA lesions and influences diverse endpoints in the cellular DNA damage response including cell-cycle checkpoint activation, recombinational repair and maintenance of genomic stability. Required for efficient homologous recombination-dependent repair of double-strand breaks (DSBs) and ATM-dependent signaling pathways. In Mus musculus (Mouse), this protein is SOSS complex subunit B1 (Nabp2).